The sequence spans 1111 residues: Kinesin-like protein KIP1 (1111 aa).

Polar residues predominate over residues 1 to 11 (MARSSLPNRRT). A disordered region spans residues 1–34 (MARSSLPNRRTAQFEANKRRTIAHAPSPSLSNGM). The Kinesin motor domain occupies 52–410 (NIHVYVRCRS…LEYATRAKSI (359 aa)). 141–148 (GQTGTGKT) contributes to the ATP binding site. 4 coiled-coil regions span residues 424–510 (TCLK…IIQN), 648–670 (KDLN…DIKS), 710–780 (KLIK…DQDI), and 808–828 (HNAE…TNDL). Basic and acidic residues predominate over residues 1007-1016 (AENKSKDDTS). The interval 1007–1111 (AENKSKDDTS…DILQNKKLHQ (105 aa)) is disordered. Composition is skewed to polar residues over residues 1017–1038 (NSRT…QFSP) and 1057–1082 (SINS…SQNN).

It belongs to the TRAFAC class myosin-kinesin ATPase superfamily. Kinesin family. BimC subfamily. As to quaternary structure, might be dimeric.

It localises to the cytoplasm. Its subcellular location is the cytoskeleton. The protein resides in the spindle. Functionally, required for assembly of the mitotic spindle. Interacts with spindle microtubules to produce an outwardly directed force acting upon the poles. Following spindle assembly, CIN8 and KIP1 apparently act to oppose a force that draws separated poles back together. This force seems to be mediate by KAR3. The protein is Kinesin-like protein KIP1 (KIP1) of Saccharomyces cerevisiae (strain ATCC 204508 / S288c) (Baker's yeast).